A 124-amino-acid chain; its full sequence is Acidic phospholipase A2 BA2 (124 aa).

Cystine bridges form between Cys-26/Cys-116, Cys-28/Cys-44, Cys-43/Cys-95, Cys-49/Cys-124, Cys-50/Cys-88, Cys-57/Cys-81, and Cys-75/Cys-86. Ca(2+)-binding residues include Tyr-27, Gly-29, and Gly-31. Residue His-47 is part of the active site. Residue Asp-48 coordinates Ca(2+). Asp-89 is a catalytic residue.

The protein belongs to the phospholipase A2 family. Group II subfamily. D49 sub-subfamily. Ca(2+) is required as a cofactor. As to expression, expressed by the venom gland.

The protein resides in the secreted. The catalysed reaction is a 1,2-diacyl-sn-glycero-3-phosphocholine + H2O = a 1-acyl-sn-glycero-3-phosphocholine + a fatty acid + H(+). Functionally, PLA2 catalyzes the calcium-dependent hydrolysis of the 2-acyl groups in 3-sn-phosphoglycerides. This is Acidic phospholipase A2 BA2 from Gloydius halys (Chinese water mocassin).